A 261-amino-acid chain; its full sequence is Adenosylcobinamide-GDP ribazoletransferase (261 aa).

7 consecutive transmembrane segments (helical) span residues 9 to 29 (LELF…VSLP), 41 to 61 (YFAL…SLAT), 64 to 84 (FSTN…TGAF), 114 to 134 (IGTY…LLLT), 141 to 161 (SLVP…ASLI), 196 to 216 (ATLL…SLIF), and 235 to 255 (CLGA…LAFL).

Belongs to the CobS family. Requires Mg(2+) as cofactor.

The protein resides in the cell inner membrane. It carries out the reaction alpha-ribazole + adenosylcob(III)inamide-GDP = adenosylcob(III)alamin + GMP + H(+). It catalyses the reaction alpha-ribazole 5'-phosphate + adenosylcob(III)inamide-GDP = adenosylcob(III)alamin 5'-phosphate + GMP + H(+). It participates in cofactor biosynthesis; adenosylcobalamin biosynthesis; adenosylcobalamin from cob(II)yrinate a,c-diamide: step 7/7. In terms of biological role, joins adenosylcobinamide-GDP and alpha-ribazole to generate adenosylcobalamin (Ado-cobalamin). Also synthesizes adenosylcobalamin 5'-phosphate from adenosylcobinamide-GDP and alpha-ribazole 5'-phosphate. The protein is Adenosylcobinamide-GDP ribazoletransferase of Vibrio cholerae serotype O1 (strain ATCC 39541 / Classical Ogawa 395 / O395).